The chain runs to 162 residues: Nucleotide-binding protein Mpe_A3039 (162 aa).

Belongs to the YajQ family.

In terms of biological role, nucleotide-binding protein. This is Nucleotide-binding protein Mpe_A3039 from Methylibium petroleiphilum (strain ATCC BAA-1232 / LMG 22953 / PM1).